The following is a 44-amino-acid chain: Benzaldehyde dehydrogenase [NAD(+)] II (44 aa).

The protein belongs to the aldehyde dehydrogenase family.

It catalyses the reaction benzaldehyde + NAD(+) + H2O = benzoate + NADH + 2 H(+). The sequence is that of Benzaldehyde dehydrogenase [NAD(+)] II from Acinetobacter guillouiae (Acinetobacter genomosp. 11).